Here is a 103-residue protein sequence, read N- to C-terminus: Thioredoxin-1 (103 aa).

The region spanning 2–103 is the Thioredoxin domain; that stretch reads VTQFKTASEF…AIKQAIAANA (102 aa). Residues C30 and C33 each act as nucleophile in the active site. A disulfide bridge connects residues C30 and C33. Glycyl lysine isopeptide (Lys-Gly) (interchain with G-Cter in ubiquitin) cross-links involve residues K54, K66, and K96.

This sequence belongs to the thioredoxin family. In terms of assembly, monomer. Part of the heterodimeric LMA1 complex together with the proteinase inhibitor PBI2. Most of the thioredoxin of yeast is in this complex rather than the well-studied monomer. LMA1 binds to the ATPase SEC18. Reversible disulfide bond formation between Cys-30 and Cys-33, reverted by thioredoxin reductase TRR1 using NADPH as hydrogen donor.

It is found in the nucleus. Its subcellular location is the cytoplasm. The protein localises to the golgi apparatus membrane. The protein resides in the mitochondrion intermembrane space. Its function is as follows. Participates as a hydrogen donor in redox reactions through the reversible oxidation of its active center dithiol to a disulfide, accompanied by the transfer of 2 electrons and 2 protons. It is involved in many cellular processes, including deoxyribonucleotide synthesis, repair of oxidatively damaged proteins, protein folding, sulfur metabolism, and redox homeostasis. Thioredoxin-dependent enzymes include phosphoadenosine-phosphosulfate reductase MET16, alkyl-hydroperoxide reductase DOT5, thioredoxin peroxidases TSA1 and TSA2, alkyl hydroperoxide reductase AHP1, and peroxiredoxin HYR1. Thioredoxin is also involved in protection against reducing stress. As part of the LMA1 complex, it is involved in the facilitation of vesicle fusion such as homotypic vacuole and ER-derived COPII vesicle fusion with the Golgi. This activity does not require the redox mechanism. This is Thioredoxin-1 (TRX1) from Saccharomyces cerevisiae (strain ATCC 204508 / S288c) (Baker's yeast).